The sequence spans 320 residues: RNA polymerase sigma factor SigA2 (320 aa).

A sigma-70 factor domain-2 region spans residues M89 to T159. Positions D113 to Q116 match the Interaction with polymerase core subunit RpoC motif. Residues E168–Y243 form a sigma-70 factor domain-3 region. The segment at L256–R310 is sigma-70 factor domain-4. Residues L282–R301 constitute a DNA-binding region (H-T-H motif).

The protein belongs to the sigma-70 factor family.

It is found in the cytoplasm. In terms of biological role, sigma factors are initiation factors that promote the attachment of RNA polymerase to specific initiation sites and are then released. This sigma factor is a component of the biological clock pathway that affects the circadian expression of a subset of genes in this bacterium. The protein is RNA polymerase sigma factor SigA2 (sigA2) of Synechococcus elongatus (strain ATCC 33912 / PCC 7942 / FACHB-805) (Anacystis nidulans R2).